The chain runs to 97 residues: UPF0473 protein Exig_2070 (97 aa).

Belongs to the UPF0473 family.

The chain is UPF0473 protein Exig_2070 from Exiguobacterium sibiricum (strain DSM 17290 / CCUG 55495 / CIP 109462 / JCM 13490 / 255-15).